A 121-amino-acid polypeptide reads, in one-letter code: Small ribosomal subunit protein eS24 (121 aa).

The protein belongs to the eukaryotic ribosomal protein eS24 family.

The polypeptide is Small ribosomal subunit protein eS24 (Pyrobaculum aerophilum (strain ATCC 51768 / DSM 7523 / JCM 9630 / CIP 104966 / NBRC 100827 / IM2)).